The chain runs to 490 residues: Glutamate--tRNA ligase (490 aa).

The 'HIGH' region motif lies at 10-20 (PSPTGSLHIGG). Residues 251–255 (KLSKR) carry the 'KMSKS' region motif. Lysine 254 serves as a coordination point for ATP.

This sequence belongs to the class-I aminoacyl-tRNA synthetase family. Glutamate--tRNA ligase type 1 subfamily. Monomer.

It localises to the cytoplasm. It carries out the reaction tRNA(Glu) + L-glutamate + ATP = L-glutamyl-tRNA(Glu) + AMP + diphosphate. Catalyzes the attachment of glutamate to tRNA(Glu) in a two-step reaction: glutamate is first activated by ATP to form Glu-AMP and then transferred to the acceptor end of tRNA(Glu). This chain is Glutamate--tRNA ligase, found in Moorella thermoacetica (strain ATCC 39073 / JCM 9320).